The primary structure comprises 80 residues: Exodeoxyribonuclease 7 small subunit (80 aa).

It belongs to the XseB family. As to quaternary structure, heterooligomer composed of large and small subunits.

It localises to the cytoplasm. It carries out the reaction Exonucleolytic cleavage in either 5'- to 3'- or 3'- to 5'-direction to yield nucleoside 5'-phosphates.. Functionally, bidirectionally degrades single-stranded DNA into large acid-insoluble oligonucleotides, which are then degraded further into small acid-soluble oligonucleotides. The chain is Exodeoxyribonuclease 7 small subunit from Klebsiella pneumoniae (strain 342).